A 252-amino-acid polypeptide reads, in one-letter code: Triosephosphate isomerase (252 aa).

10–12 (NWK) serves as a coordination point for substrate. His-96 serves as the catalytic Electrophile. The active-site Proton acceptor is the Glu-168. Substrate-binding positions include Gly-174, Ser-213, and 234–235 (GG).

Belongs to the triosephosphate isomerase family. In terms of assembly, homodimer.

It localises to the cytoplasm. The catalysed reaction is D-glyceraldehyde 3-phosphate = dihydroxyacetone phosphate. Its pathway is carbohydrate biosynthesis; gluconeogenesis. It functions in the pathway carbohydrate degradation; glycolysis; D-glyceraldehyde 3-phosphate from glycerone phosphate: step 1/1. Involved in the gluconeogenesis. Catalyzes stereospecifically the conversion of dihydroxyacetone phosphate (DHAP) to D-glyceraldehyde-3-phosphate (G3P). The polypeptide is Triosephosphate isomerase (Nitrosomonas eutropha (strain DSM 101675 / C91 / Nm57)).